We begin with the raw amino-acid sequence, 274 residues long: Rhamnulose-1-phosphate aldolase (274 aa).

Residue E117 is part of the active site. Zn(2+)-binding residues include H141, H143, and H212.

It belongs to the aldolase class II family. RhaD subfamily. In terms of assembly, homotetramer. Zn(2+) serves as cofactor.

Its subcellular location is the cytoplasm. The enzyme catalyses L-rhamnulose 1-phosphate = (S)-lactaldehyde + dihydroxyacetone phosphate. Its pathway is carbohydrate degradation; L-rhamnose degradation; glycerone phosphate from L-rhamnose: step 3/3. Functionally, catalyzes the reversible cleavage of L-rhamnulose-1-phosphate to dihydroxyacetone phosphate (DHAP) and L-lactaldehyde. This Shigella sonnei (strain Ss046) protein is Rhamnulose-1-phosphate aldolase.